Here is a 35-residue protein sequence, read N- to C-terminus: Z-limacoditoxin(1)-Dv1 (35 aa).

Positions 1–22 (MKKTFLPIFLVILLASYALANP) are cleaved as a signal peptide. Q23 is subject to Pyrrolidone carboxylic acid. Position 32 is a proline amide (P32).

This sequence belongs to the limacoditoxin-1 (ACP-like) family. In terms of tissue distribution, expressed by the venom secretory cell of the spine. The spine is a cuticular structure containing a single large nucleated venom-secreting cell at its base. It is an independent unit capable of producing, storing and injecting venom. On the back of D.vulnerans caterpillars, spines are grouped together by 50 to 100 to form scoli, of which there are eight in D.vulnerans.

It is found in the secreted. Potently activates insect G protein-coupled receptor. It activates the ACP receptor (ACPR) from the mosquito A.aegypti (EC(50)=0.55 nM) with a potency comparable to that of the endogenous ligand. Has no activity on receptors of the closely related neuropeptides adipokinetic hormone and corazonin. In vivo, does not reveal any observable effects when injected into crickets (A.domesticus). Does not induce increase in intracellular calcium in mouse DRG neurons, suggesting that it does not induce pain. The polypeptide is Z-limacoditoxin(1)-Dv1 (Doratifera vulnerans (Mottled cup moth)).